Reading from the N-terminus, the 100-residue chain is MAKVTREEVEHIANLARLQITEDETTEMQNTLESILNFANQIDTADTSEIEPTYHVLDLQNVLREDKAIEGIPQELALKNAKVTEDGQFKVPSIMNEEDA.

Belongs to the GatC family. In terms of assembly, heterotrimer of A, B and C subunits.

The enzyme catalyses L-glutamyl-tRNA(Gln) + L-glutamine + ATP + H2O = L-glutaminyl-tRNA(Gln) + L-glutamate + ADP + phosphate + H(+). The catalysed reaction is L-aspartyl-tRNA(Asn) + L-glutamine + ATP + H2O = L-asparaginyl-tRNA(Asn) + L-glutamate + ADP + phosphate + 2 H(+). Functionally, allows the formation of correctly charged Asn-tRNA(Asn) or Gln-tRNA(Gln) through the transamidation of misacylated Asp-tRNA(Asn) or Glu-tRNA(Gln) in organisms which lack either or both of asparaginyl-tRNA or glutaminyl-tRNA synthetases. The reaction takes place in the presence of glutamine and ATP through an activated phospho-Asp-tRNA(Asn) or phospho-Glu-tRNA(Gln). The chain is Aspartyl/glutamyl-tRNA(Asn/Gln) amidotransferase subunit C from Staphylococcus saprophyticus subsp. saprophyticus (strain ATCC 15305 / DSM 20229 / NCIMB 8711 / NCTC 7292 / S-41).